Here is a 343-residue protein sequence, read N- to C-terminus: Aspartate carbamoyltransferase catalytic subunit (343 aa).

Carbamoyl phosphate contacts are provided by Arg91 and Thr92. An L-aspartate-binding site is contributed by Lys119. Carbamoyl phosphate is bound by residues Arg141, His171, and Gln174. L-aspartate-binding residues include Arg204 and Arg259. Residues Gly300 and Pro301 each contribute to the carbamoyl phosphate site.

The protein belongs to the aspartate/ornithine carbamoyltransferase superfamily. ATCase family. Heterododecamer (2C3:3R2) of six catalytic PyrB chains organized as two trimers (C3), and six regulatory PyrI chains organized as three dimers (R2).

The catalysed reaction is carbamoyl phosphate + L-aspartate = N-carbamoyl-L-aspartate + phosphate + H(+). Its pathway is pyrimidine metabolism; UMP biosynthesis via de novo pathway; (S)-dihydroorotate from bicarbonate: step 2/3. Functionally, catalyzes the condensation of carbamoyl phosphate and aspartate to form carbamoyl aspartate and inorganic phosphate, the committed step in the de novo pyrimidine nucleotide biosynthesis pathway. This is Aspartate carbamoyltransferase catalytic subunit from Burkholderia orbicola (strain MC0-3).